Here is a 212-residue protein sequence, read N- to C-terminus: Uracil phosphoribosyltransferase (212 aa).

Residues arginine 78, arginine 103, and 130–138 (DPMLATGGS) contribute to the 5-phospho-alpha-D-ribose 1-diphosphate site. Uracil-binding positions include isoleucine 193 and 198–200 (GDA). Aspartate 199 contributes to the 5-phospho-alpha-D-ribose 1-diphosphate binding site.

The protein belongs to the UPRTase family. The cofactor is Mg(2+).

The catalysed reaction is UMP + diphosphate = 5-phospho-alpha-D-ribose 1-diphosphate + uracil. The protein operates within pyrimidine metabolism; UMP biosynthesis via salvage pathway; UMP from uracil: step 1/1. Its activity is regulated as follows. Allosterically activated by GTP. Catalyzes the conversion of uracil and 5-phospho-alpha-D-ribose 1-diphosphate (PRPP) to UMP and diphosphate. This Pseudomonas paraeruginosa (strain DSM 24068 / PA7) (Pseudomonas aeruginosa (strain PA7)) protein is Uracil phosphoribosyltransferase.